Reading from the N-terminus, the 731-residue chain is Alpha-1,4-glucan:maltose-1-phosphate maltosyltransferase (731 aa).

A compositionally biased stretch (basic and acidic residues) spans 1–10 (MEAQHNETEA). The segment at 1 to 31 (MEAQHNETEAAGKPAAKKTTRTRKPRASKQA) is disordered. The span at 15-27 (AAKKTTRTRKPRA) shows a compositional bias: basic residues. Positions 321, 381, and 416 each coordinate alpha-maltose 1-phosphate. Catalysis depends on Asp451, which acts as the Nucleophile. Residue Asn452 coordinates alpha-maltose 1-phosphate. Glu480 (proton donor) is an active-site residue. An alpha-maltose 1-phosphate-binding site is contributed by 590 to 591 (KF).

The protein belongs to the glycosyl hydrolase 13 family. GlgE subfamily. In terms of assembly, homodimer.

It catalyses the reaction alpha-maltose 1-phosphate + [(1-&gt;4)-alpha-D-glucosyl](n) = [(1-&gt;4)-alpha-D-glucosyl](n+2) + phosphate. Functionally, maltosyltransferase that uses maltose 1-phosphate (M1P) as the sugar donor to elongate linear or branched alpha-(1-&gt;4)-glucans. Is involved in a branched alpha-glucan biosynthetic pathway from trehalose, together with TreS, Mak and GlgB. The chain is Alpha-1,4-glucan:maltose-1-phosphate maltosyltransferase from Bifidobacterium animalis subsp. lactis (strain Bl-04 / DGCC2908 / RB 4825 / SD5219).